A 1100-amino-acid polypeptide reads, in one-letter code: Lysylphosphatidylglycerol biosynthesis bifunctional protein LysX (1100 aa).

Positions 1-601 are phosphatidylglycerol lysyltransferase; sequence MTPTSLARAR…LLHSDGTAPD (601 aa). 7 consecutive transmembrane segments (helical) span residues 18 to 38, 60 to 80, 84 to 104, 112 to 132, 154 to 174, 206 to 226, and 314 to 332; these read VPAA…LASV, FPDT…ALAA, IAWW…IAGL, FAEV…AFLL, LVAS…LFPG, VFVN…TAIV, and AYGW…AQAF. The tract at residues 602–1100 is lysine--tRNA ligase; that stretch reads GMGLQADLAD…TLPFPLAKPR (499 aa). The segment at residues 661-739 is a DNA-binding region (OB); sequence VAVAGRVLRS…SLLVSGWRLI (79 aa). Mg(2+)-binding residues include aspartate 1012 and glutamate 1019.

This sequence in the N-terminal section; belongs to the LPG synthetase family. In the C-terminal section; belongs to the class-II aminoacyl-tRNA synthetase family. Mg(2+) is required as a cofactor.

It is found in the cell membrane. It carries out the reaction tRNA(Lys) + L-lysine + ATP = L-lysyl-tRNA(Lys) + AMP + diphosphate. The enzyme catalyses L-lysyl-tRNA(Lys) + a 1,2-diacyl-sn-glycero-3-phospho-(1'-sn-glycerol) = a 1,2-diacyl-sn-glycero-3-phospho-1'-(3'-O-L-lysyl)-sn-glycerol + tRNA(Lys). Its function is as follows. Catalyzes the production of L-lysyl-tRNA(Lys)transfer and the transfer of a lysyl group from L-lysyl-tRNA(Lys) to membrane-bound phosphatidylglycerol (PG), which produces lysylphosphatidylglycerol (LPG), one of the components of the bacterial membrane with a positive net charge. LPG synthesis contributes to the resistance to cationic antimicrobial peptides (CAMPs) and likely protects M.tuberculosis against the CAMPs produced by competiting microorganisms (bacteriocins). In fact, the modification of anionic phosphatidylglycerol with positively charged L-lysine results in repulsion of the peptides. In Mycolicibacterium vanbaalenii (strain DSM 7251 / JCM 13017 / BCRC 16820 / KCTC 9966 / NRRL B-24157 / PYR-1) (Mycobacterium vanbaalenii), this protein is Lysylphosphatidylglycerol biosynthesis bifunctional protein LysX (lysX).